The sequence spans 493 residues: MTETSISGLRGPKSMYFMEIVDVSSQESSVLSSIVESFTSAVSASNLGVYSDEVLCDIKSSLKENSPITMLPNYNVSPTGDEHGQYLVIDLGGSTLRIAVVDISKPHPNLSRSERITIVVEKSWIIGNDFKRIDGEFFKYIGSKINEILMGQNVIDVKSVINTGITWSFPLETTDYNRGKIKHVSKGYTVGEDIYDKDLKMVLEDTLRQEYGLTLDVQSILNDSLAVYSAGCFIDSKMKLAMVLGTGINMCCSLKRSSDIHPSKMLADATLFNCELSLFGQNLCKDFATKYDIIIDKRFAGLSHHFKTFMEPDPITKTLFQPHELMTSGRYLPELTRLVVVDLIEAGEIFQNVDHQQMYQEYGGFSGELICFVHENDDYDDIHDKLCKAYGWTTVGLSDIVCLKEVVSCIIKRAAFIVANAIIAFFKLLGSDELGGDVTIGYVGSVLNYFHKYRRLIVEYVNSAEEAKGIKVDLKLIENSSIIGAAIGAAYHK.

Positions 27–490 (ESSVLSSIVE…SIIGAAIGAA (464 aa)) constitute a Hexokinase domain. The hexokinase small subdomain stretch occupies residues 79-221 (TGDEHGQYLV…GLTLDVQSIL (143 aa)). The tract at residues 222 to 479 (NDSLAVYSAG…IKVDLKLIEN (258 aa)) is hexokinase large subdomain.

Belongs to the hexokinase family. In terms of assembly, interacts with histone deacetylase SIR2 under filamentation-inducing conditions.

The protein localises to the cytoplasm. Its subcellular location is the nucleus. It localises to the mitochondrion. The enzyme catalyses N-acetyl-D-glucosamine + ATP = N-acetyl-D-glucosamine 6-phosphate + ADP + H(+). It carries out the reaction D-mannose + ATP = D-mannose 6-phosphate + ADP + H(+). The catalysed reaction is D-glucose + ATP = D-glucose 6-phosphate + ADP + H(+). It catalyses the reaction D-glucosamine + ATP = D-glucosamine 6-phosphate + ADP + H(+). It participates in carbohydrate metabolism; hexose metabolism. It functions in the pathway carbohydrate degradation; glycolysis; D-glyceraldehyde 3-phosphate and glycerone phosphate from D-glucose: step 1/4. Functionally, component of the N-acetylglucosamine catabolic cascade that phosphorylates N-acetylglucosamine (GlcNAc), and allows the unique ability to utilise GlcNAc as carbon source. Converts GlcNAc to GlcNAc-6-P. Also able to phosphorylate glucose, glucosamine (GlcN), and mannose. Galactose, fructose, N-acetylmannosamine (ManNAc), mannosamine (ManN), galactosamine (GalN), and N-acetylgalactosamine (GalNAc) are not phosphorylated by HXK1. GlcNAc metabolism is closely associated with virulence and morphogenesis, and is involved in the cell wall synthesis. Acts both as a repressor and an activator of genes involved in maintaining cellular homeostasis. Contributes to white-opaque morphological transition and plays a role as a filamentation repressor. This chain is N-acetylglucosamine kinase 1, found in Candida albicans (strain SC5314 / ATCC MYA-2876) (Yeast).